We begin with the raw amino-acid sequence, 201 residues long: Probable nicotinate-nucleotide adenylyltransferase (201 aa).

This sequence belongs to the NadD family.

The enzyme catalyses nicotinate beta-D-ribonucleotide + ATP + H(+) = deamido-NAD(+) + diphosphate. Its pathway is cofactor biosynthesis; NAD(+) biosynthesis; deamido-NAD(+) from nicotinate D-ribonucleotide: step 1/1. Its function is as follows. Catalyzes the reversible adenylation of nicotinate mononucleotide (NaMN) to nicotinic acid adenine dinucleotide (NaAD). The protein is Probable nicotinate-nucleotide adenylyltransferase of Clostridium botulinum (strain Loch Maree / Type A3).